Consider the following 318-residue polypeptide: Myoblast determination protein 1 (318 aa).

Met-1 is covalently cross-linked (Peptide (Met-Gly) (interchain with G-Cter in ubiquitin)). Residue Lys-104 is modified to N6-methyllysine; by EHMT2. The region spanning 109-160 is the bHLH domain; it reads DRRKAATMRERRRLSKVNEAFETLKRCTSSNPNQRLPKVEILRNAIRYIEGL. Disordered regions lie at residues 175-224 and 262-318; these read AAFY…RQNG and SPAA…YQVL. Over residues 196-206 the composition is skewed to polar residues; the sequence is SDASSPRSNCS. The segment covering 262–271 has biased composition (low complexity); the sequence is SPAAPSLLLP. Over residues 272 to 282 the composition is skewed to pro residues; the sequence is DAPPESPPGPP. Positions 290–304 are enriched in polar residues; the sequence is AEQGTQTPSPDSTPQ.

Efficient DNA binding requires dimerization with another bHLH protein. Seems to form active heterodimers with ITF-2. Interacts with SUV39H1. Interacts with DDX5. Interacts with CHD2. Interacts with TSC22D3. Interacts with SETD3. Interacts with P-TEFB complex; promotes the transcriptional activity of MYOD1 through its CDK9-mediated phosphorylation. Interacts with CSRP3. Interacts with NUPR1. In terms of processing, phosphorylated by CDK9. This phosphorylation promotes its function in muscle differentiation. Acetylated by a complex containing EP300 and PCAF. The acetylation is essential to activate target genes. Conversely, its deacetylation by SIRT1 inhibits its function. Post-translationally, ubiquitinated on the N-terminus; which is required for proteasomal degradation. In terms of processing, methylation at Lys-104 by EHMT2/G9a inhibits myogenic activity.

It localises to the nucleus. In terms of biological role, acts as a transcriptional activator that promotes transcription of muscle-specific target genes and plays a role in muscle differentiation. Together with MYF5 and MYOG, co-occupies muscle-specific gene promoter core region during myogenesis. Induces fibroblasts to differentiate into myoblasts. Interacts with and is inhibited by the twist protein. This interaction probably involves the basic domains of both proteins. This is Myoblast determination protein 1 (Myod1) from Rattus norvegicus (Rat).